Reading from the N-terminus, the 62-residue chain is Photosystem II reaction center protein Z (62 aa).

A run of 2 helical transmembrane segments spans residues 8-28 (TLFA…VVFA) and 41-61 (FSGI…NSFV).

Belongs to the PsbZ family. As to quaternary structure, PSII is composed of 1 copy each of membrane proteins PsbA, PsbB, PsbC, PsbD, PsbE, PsbF, PsbH, PsbI, PsbJ, PsbK, PsbL, PsbM, PsbT, PsbY, PsbZ, Psb30/Ycf12, at least 3 peripheral proteins of the oxygen-evolving complex and a large number of cofactors. It forms dimeric complexes.

The protein localises to the plastid. The protein resides in the chloroplast thylakoid membrane. Functionally, may control the interaction of photosystem II (PSII) cores with the light-harvesting antenna, regulates electron flow through the 2 photosystem reaction centers. PSII is a light-driven water plastoquinone oxidoreductase, using light energy to abstract electrons from H(2)O, generating a proton gradient subsequently used for ATP formation. This is Photosystem II reaction center protein Z from Tupiella akineta (Green alga).